Consider the following 387-residue polypeptide: Capsid protein (387 aa).

The span at 1-33 shows a compositional bias: basic residues; the sequence is MARTKSKPRKRTTVRKARRSVKRRTTTKGTKRK. 2 disordered regions span residues 1-47 and 365-387; these read MART…RGVA and KSAK…REFN. 2 short sequence motifs (nuclear localization signal) span residues 8–15 and 30–37; these read PRKRTTVR and TKRKTAGD. Residues 370 to 379 are compositionally biased toward low complexity; that stretch reads NDQLNNNQDA.

It localises to the host nucleus. The protein resides in the virion. Functionally, self-assembles to form the virion icosahedral capsid. This Chaetoceros protobacilladnavirus 2 (Chaetoceros sp. DNA virus 7) protein is Capsid protein.